A 555-amino-acid chain; its full sequence is Probable terpene synthase 6 (555 aa).

Mg(2+) contacts are provided by Asp309, Asp313, and Glu460. Positions Asp309–Asp313 match the DDXXD motif motif.

Belongs to the terpene synthase family. The cofactor is Mg(2+).

Its function is as follows. Probable sesquiterpene synthase. This Ricinus communis (Castor bean) protein is Probable terpene synthase 6 (TPS6).